The sequence spans 836 residues: Serine/threonine-protein kinase 1 (836 aa).

Basic residues predominate over residues 1 to 12 (MDHNSPKSRRSR). Residues 1–244 (MDHNSPKSRR…SLPDSITRED (244 aa)) form a disordered region. Residues 28-40 (SDSDSDQGRDRDK) are compositionally biased toward basic and acidic residues. Acidic residues-rich tracts occupy residues 64 to 75 (DGEGEEDDDDDS), 95 to 105 (DYDDDDGDESG), and 145 to 163 (EESS…DDGD). The span at 224-238 (MQQQNSKMSTTSLPD) shows a compositional bias: polar residues. The Protein kinase domain maps to 249–503 (YEFLNELGKG…AAEMLKHKFV (255 aa)). Residues 255 to 263 (LGKGSYGSV) and K278 contribute to the ATP site. The active-site Proton acceptor is D371. 3 disordered regions span residues 539-571 (LEDT…APLT), 600-640 (EDET…DSWI), and 760-780 (TSSD…PLPP). Residues 562-571 (PQNSTEAPLT) show a composition bias toward polar residues. Over residues 606-618 (SDSRSQLVREKES) the composition is skewed to basic and acidic residues.

The protein belongs to the protein kinase superfamily. STE Ser/Thr protein kinase family. STE20 subfamily. In terms of assembly, interacts with MOB1A and MOB1B via its N-terminal region at the plasma membrane and in the nucleus. Binds to BIK1 to phosphorylate and stabilize it. Interacts with and phosphorylates RBOHD upon flagellin perception to activate it. Requires Mn(2+) as cofactor. Autophosphorylates. As to expression, mostly expressed in mature tissues of roots, shoots, hypocotyls, cotyledons, stems, leaves and flowers, as well as in the shoot apical meristem (SAM).

Its subcellular location is the cell membrane. The protein localises to the nucleus. It localises to the golgi apparatus. The protein resides in the trans-Golgi network. It is found in the early endosome. It catalyses the reaction L-seryl-[protein] + ATP = O-phospho-L-seryl-[protein] + ADP + H(+). The enzyme catalyses L-threonyl-[protein] + ATP = O-phospho-L-threonyl-[protein] + ADP + H(+). Its function is as follows. Serine/threonine-protein kinase. Regulates organ size in coordination with MOB1A by modulating cell proliferation and cell expansion, possibly by facilitating cell cycle exit. Positive regulator of the pathogen-associated molecular pattern (PAMP, e.g. flg22)-triggered immunity (PTI) signaling by stabilizing BIK1 and activating RBOHD by phosphorylation to promote the extracellular reactive oxygen species (ROS) burst involved in defense responses to bacterial infection. This chain is Serine/threonine-protein kinase 1, found in Arabidopsis thaliana (Mouse-ear cress).